A 431-amino-acid polypeptide reads, in one-letter code: Tyrosine--tRNA ligase (431 aa).

Tyr34 is an L-tyrosine binding site. A 'HIGH' region motif is present at residues 39–48; it reads PTADSLHIGH. Positions 171 and 175 each coordinate L-tyrosine. Residues 231 to 235 carry the 'KMSKS' region motif; sequence KFGKT. Lys234 serves as a coordination point for ATP. An S4 RNA-binding domain is found at 353–422; sequence INVVEALVKT…GKYTILRRGK (70 aa).

The protein belongs to the class-I aminoacyl-tRNA synthetase family. TyrS type 1 subfamily. In terms of assembly, homodimer.

The protein localises to the cytoplasm. It catalyses the reaction tRNA(Tyr) + L-tyrosine + ATP = L-tyrosyl-tRNA(Tyr) + AMP + diphosphate + H(+). Functionally, catalyzes the attachment of tyrosine to tRNA(Tyr) in a two-step reaction: tyrosine is first activated by ATP to form Tyr-AMP and then transferred to the acceptor end of tRNA(Tyr). In Neisseria meningitidis serogroup C (strain 053442), this protein is Tyrosine--tRNA ligase.